Consider the following 238-residue polypeptide: Survival of motor neuron-related-splicing factor 30 (238 aa).

In terms of domain architecture, Tudor spans 72 to 132 (SWKVGDKCMA…KPVEEGRKAK (61 aa)). Positions 142–160 (KKEMIAQQREYKKKKALKK) match the Nuclear localization signal motif. At Ser201 the chain carries Phosphoserine. The residue at position 219 (Lys219) is an N6-acetyllysine.

It belongs to the SMN family. In terms of assembly, associates with spliceosomes. Associates with U4/U5/U6 tri-snRNP and with U2 snRNP. Interacts (via Tudor domain) with SNRPD3 (via C-terminus); the interaction is direct. Detected at intermediate levels in skeletal muscle, and at low levels in heart and pancreas.

The protein localises to the nucleus speckle. It is found in the nucleus. It localises to the cajal body. Functionally, involved in spliceosome assembly. The chain is Survival of motor neuron-related-splicing factor 30 (SMNDC1) from Homo sapiens (Human).